The sequence spans 594 residues: A-type ATP synthase subunit A (594 aa).

An ATP-binding site is contributed by 236-243; it reads GPFGSGKT.

The protein belongs to the ATPase alpha/beta chains family. In terms of assembly, has multiple subunits with at least A(3), B(3), C, D, E, F, H, I and proteolipid K(x).

The protein localises to the cell membrane. It carries out the reaction ATP + H2O + 4 H(+)(in) = ADP + phosphate + 5 H(+)(out). In terms of biological role, component of the A-type ATP synthase that produces ATP from ADP in the presence of a proton gradient across the membrane. The A chain is the catalytic subunit. The protein is A-type ATP synthase subunit A of Pyrobaculum neutrophilum (strain DSM 2338 / JCM 9278 / NBRC 100436 / V24Sta) (Thermoproteus neutrophilus).